Consider the following 212-residue polypeptide: Large ribosomal subunit protein uL3 (212 aa).

Residues 134-155 (RNSHGNSLSHRAPGSIGQNQSP) form a disordered region. Q153 carries the post-translational modification N5-methylglutamine.

Belongs to the universal ribosomal protein uL3 family. Part of the 50S ribosomal subunit. Forms a cluster with proteins L14 and L19. Methylated by PrmB.

In terms of biological role, one of the primary rRNA binding proteins, it binds directly near the 3'-end of the 23S rRNA, where it nucleates assembly of the 50S subunit. This is Large ribosomal subunit protein uL3 from Pseudoalteromonas atlantica (strain T6c / ATCC BAA-1087).